The chain runs to 165 residues: Nascent polypeptide-associated complex subunit alpha (165 aa).

The 65-residue stretch at 14–78 (NRNEKKAREL…AKVDNFTQRL (65 aa)) folds into the NAC-A/B domain. The UBA domain maps to 126–165 (LSNDDIDLVVQQTNATKGQAIKALKEHNGDIVNAIMSLSK).

The protein belongs to the NAC-alpha family. Part of the nascent polypeptide-associated complex (NAC), consisting of EGD2 and EGD1. NAC associates with ribosomes via EGD1.

The protein localises to the cytoplasm. It localises to the nucleus. In terms of biological role, component of the nascent polypeptide-associated complex (NAC), a dynamic component of the ribosomal exit tunnel, protecting the emerging polypeptides from interaction with other cytoplasmic proteins to ensure appropriate nascent protein targeting. The NAC complex also promotes mitochondrial protein import by enhancing productive ribosome interactions with the outer mitochondrial membrane and blocks the inappropriate interaction of ribosomes translating non-secretory nascent polypeptides with translocation sites in the membrane of the endoplasmic reticulum. EGD2 may also be involved in transcription regulation. The chain is Nascent polypeptide-associated complex subunit alpha (EGD2) from Candida glabrata (strain ATCC 2001 / BCRC 20586 / JCM 3761 / NBRC 0622 / NRRL Y-65 / CBS 138) (Yeast).